Here is a 200-residue protein sequence, read N- to C-terminus: ATP-dependent Clp protease proteolytic subunit 2 (200 aa).

Serine 100 serves as the catalytic Nucleophile.

Belongs to the peptidase S14 family. In terms of assembly, fourteen ClpP subunits assemble into 2 heptameric rings which stack back to back to give a disk-like structure with a central cavity, resembling the structure of eukaryotic proteasomes.

It localises to the cytoplasm. The catalysed reaction is Hydrolysis of proteins to small peptides in the presence of ATP and magnesium. alpha-casein is the usual test substrate. In the absence of ATP, only oligopeptides shorter than five residues are hydrolyzed (such as succinyl-Leu-Tyr-|-NHMec, and Leu-Tyr-Leu-|-Tyr-Trp, in which cleavage of the -Tyr-|-Leu- and -Tyr-|-Trp bonds also occurs).. In terms of biological role, cleaves peptides in various proteins in a process that requires ATP hydrolysis. Has a chymotrypsin-like activity. Plays a major role in the degradation of misfolded proteins. The chain is ATP-dependent Clp protease proteolytic subunit 2 from Streptomyces avermitilis (strain ATCC 31267 / DSM 46492 / JCM 5070 / NBRC 14893 / NCIMB 12804 / NRRL 8165 / MA-4680).